Reading from the N-terminus, the 466-residue chain is Argininosuccinate lyase (466 aa).

The protein belongs to the lyase 1 family. Argininosuccinate lyase subfamily.

Its subcellular location is the cytoplasm. It carries out the reaction 2-(N(omega)-L-arginino)succinate = fumarate + L-arginine. Its pathway is amino-acid biosynthesis; L-arginine biosynthesis; L-arginine from L-ornithine and carbamoyl phosphate: step 3/3. This is Argininosuccinate lyase from Bartonella bacilliformis (strain ATCC 35685 / KC583 / Herrer 020/F12,63).